We begin with the raw amino-acid sequence, 294 residues long: Indole-3-glycerol phosphate synthase (294 aa).

The protein belongs to the TrpC family.

It catalyses the reaction 1-(2-carboxyphenylamino)-1-deoxy-D-ribulose 5-phosphate + H(+) = (1S,2R)-1-C-(indol-3-yl)glycerol 3-phosphate + CO2 + H2O. Its pathway is amino-acid biosynthesis; L-tryptophan biosynthesis; L-tryptophan from chorismate: step 4/5. The chain is Indole-3-glycerol phosphate synthase from Synechococcus sp. (strain RCC307).